We begin with the raw amino-acid sequence, 248 residues long: Histone H1, gonadal (248 aa).

Disordered regions lie at residues 1–46 and 115–248; these read PGSP…PPVL and AVAK…KARK. Residues 9-39 are compositionally biased toward basic residues; sequence ASPRKSPRKSPKKSPRKASASPRRKAKRARA. The H15 domain maps to 41 to 115; the sequence is THPPVLEMVQ…GASGRFRVGA (75 aa). Residues 118-248 are compositionally biased toward basic residues; the sequence is KPKKAKKTSA…KRRSPKKARK (131 aa).

Belongs to the histone H1/H5 family. Sperm.

The protein localises to the nucleus. The protein resides in the chromosome. In terms of biological role, histones H1 are necessary for the condensation of nucleosome chains into higher-order structures. The protein is Histone H1, gonadal of Parechinus angulosus (Angulate sea urchin).